The primary structure comprises 294 residues: N-acetylmuramic acid 6-phosphate etherase (294 aa).

One can recognise an SIS domain in the interval 54–217 (VIKSFEEEGR…STASMIGVGK (164 aa)). Glu82 acts as the Proton donor in catalysis. The active site involves Glu113.

Belongs to the GCKR-like family. MurNAc-6-P etherase subfamily. Homodimer.

It carries out the reaction N-acetyl-D-muramate 6-phosphate + H2O = N-acetyl-D-glucosamine 6-phosphate + (R)-lactate. The protein operates within amino-sugar metabolism; N-acetylmuramate degradation. Functionally, specifically catalyzes the cleavage of the D-lactyl ether substituent of MurNAc 6-phosphate, producing GlcNAc 6-phosphate and D-lactate. This chain is N-acetylmuramic acid 6-phosphate etherase, found in Bacillus cereus (strain G9842).